A 100-amino-acid chain; its full sequence is Protein translation factor SUI1 homolog (100 aa).

Belongs to the SUI1 family.

This chain is Protein translation factor SUI1 homolog, found in Thermoplasma volcanium (strain ATCC 51530 / DSM 4299 / JCM 9571 / NBRC 15438 / GSS1).